We begin with the raw amino-acid sequence, 328 residues long: Formimidoylglutamase (328 aa).

Mn(2+)-binding residues include H133, D159, H161, D163, D253, and D255.

It belongs to the arginase family. Mn(2+) serves as cofactor.

The enzyme catalyses N-formimidoyl-L-glutamate + H2O = formamide + L-glutamate. The protein operates within amino-acid degradation; L-histidine degradation into L-glutamate; L-glutamate from N-formimidoyl-L-glutamate (hydrolase route): step 1/1. Functionally, catalyzes the conversion of N-formimidoyl-L-glutamate to L-glutamate and formamide. The polypeptide is Formimidoylglutamase (Streptococcus pyogenes serotype M1).